A 305-amino-acid chain; its full sequence is Acetaldehyde dehydrogenase (305 aa).

12–15 provides a ligand contact to NAD(+); the sequence is SGNI. C127 serves as the catalytic Acyl-thioester intermediate. Residues 158-166 and N277 contribute to the NAD(+) site; that span reads SAGPGTRAN.

Belongs to the acetaldehyde dehydrogenase family.

It catalyses the reaction acetaldehyde + NAD(+) + CoA = acetyl-CoA + NADH + H(+). The chain is Acetaldehyde dehydrogenase from Mycolicibacterium paratuberculosis (strain ATCC BAA-968 / K-10) (Mycobacterium paratuberculosis).